Reading from the N-terminus, the 454-residue chain is MALNVVILAAGKGTRMRSDLPKVLHPIAHKSMVQHVIDTAHQLGSEAIQLVYGYGADKLQARLGEQALNWVLQAEQLGTGHAVAQANDNIGDDDTVLILYGDVPLIQVSTLEALLAARDANGLAILTVNLHDPTGYGRIVREAGKVVGIVEQKDANEEQLKINEINTGIMAAPGKQLKAWLGQLSSDNAQGEYYLTDIVAMAHSDGVSITTAQPESAIEVEGANNRVQLAQLERAYQARAAEKLMLEGANLRDPARIDVRGEVTVGMDVMIDVNVVFQGKVTIGNNVTIGAGAILIDCEIGDNAEIKPYSIIENAIVGEAASAGPFARLRPGAELKRDAHIGNFVEMKKAVLGEGSKAGHLAYIGDAQVGAGVNIGAGTITCNYDGANKHLTVIEDDVFVGSDTQLVAPVTIGKGATLGAGSTITRDVAADELVITRVKQRHLTGWTRPVKQKK.

The interval Met1–Arg226 is pyrophosphorylase. UDP-N-acetyl-alpha-D-glucosamine is bound by residues Leu8–Gly11, Lys22, Gln73, Gly78–Thr79, Tyr100–Asp102, Gly137, Glu151, Asn166, and Asn224. Asp102 contacts Mg(2+). Asn224 contributes to the Mg(2+) binding site. The linker stretch occupies residues Val227–Glu247. An N-acetyltransferase region spans residues Gly248 to Lys454. Positions 330 and 348 each coordinate UDP-N-acetyl-alpha-D-glucosamine. His360 functions as the Proton acceptor in the catalytic mechanism. 2 residues coordinate UDP-N-acetyl-alpha-D-glucosamine: Tyr363 and Asn374. Acetyl-CoA is bound by residues Ala377, Asn383–Tyr384, Ser402, Ala420, and Arg437.

In the N-terminal section; belongs to the N-acetylglucosamine-1-phosphate uridyltransferase family. This sequence in the C-terminal section; belongs to the transferase hexapeptide repeat family. In terms of assembly, homotrimer. The cofactor is Mg(2+).

It is found in the cytoplasm. The catalysed reaction is alpha-D-glucosamine 1-phosphate + acetyl-CoA = N-acetyl-alpha-D-glucosamine 1-phosphate + CoA + H(+). It carries out the reaction N-acetyl-alpha-D-glucosamine 1-phosphate + UTP + H(+) = UDP-N-acetyl-alpha-D-glucosamine + diphosphate. It participates in nucleotide-sugar biosynthesis; UDP-N-acetyl-alpha-D-glucosamine biosynthesis; N-acetyl-alpha-D-glucosamine 1-phosphate from alpha-D-glucosamine 6-phosphate (route II): step 2/2. Its pathway is nucleotide-sugar biosynthesis; UDP-N-acetyl-alpha-D-glucosamine biosynthesis; UDP-N-acetyl-alpha-D-glucosamine from N-acetyl-alpha-D-glucosamine 1-phosphate: step 1/1. The protein operates within bacterial outer membrane biogenesis; LPS lipid A biosynthesis. Functionally, catalyzes the last two sequential reactions in the de novo biosynthetic pathway for UDP-N-acetylglucosamine (UDP-GlcNAc). The C-terminal domain catalyzes the transfer of acetyl group from acetyl coenzyme A to glucosamine-1-phosphate (GlcN-1-P) to produce N-acetylglucosamine-1-phosphate (GlcNAc-1-P), which is converted into UDP-GlcNAc by the transfer of uridine 5-monophosphate (from uridine 5-triphosphate), a reaction catalyzed by the N-terminal domain. This Shewanella loihica (strain ATCC BAA-1088 / PV-4) protein is Bifunctional protein GlmU.